We begin with the raw amino-acid sequence, 215 residues long: 2-phospho-L-lactate guanylyltransferase (215 aa).

The protein belongs to the CofC family. Homodimer.

It carries out the reaction (2S)-2-phospholactate + GTP + H(+) = (2S)-lactyl-2-diphospho-5'-guanosine + diphosphate. Its pathway is cofactor biosynthesis; coenzyme F420 biosynthesis. Guanylyltransferase that catalyzes the activation of (2S)-2-phospholactate (2-PL) as (2S)-lactyl-2-diphospho-5'-guanosine, via the condensation of 2-PL with GTP. It is involved in the biosynthesis of coenzyme F420, a hydride carrier cofactor. The sequence is that of 2-phospho-L-lactate guanylyltransferase from Methanoculleus marisnigri (strain ATCC 35101 / DSM 1498 / JR1).